Here is a 301-residue protein sequence, read N- to C-terminus: Fluoroquinolones export ATP-binding protein MT2762 (301 aa).

The ABC transporter domain maps to 18–246; that stretch reads IRVRGLTFRY…RSRRRVRVEY (229 aa). ATP is bound at residue 52–59; that stretch reads GPSGAGKS.

This sequence belongs to the ABC transporter superfamily. The complex is composed of 2 ATP-binding proteins and 2 transmembrane proteins.

Its subcellular location is the cell membrane. Part of the ABC transporter complex involved in fluoroquinolones export. Probably responsible for energy coupling to the transport system. In Mycobacterium tuberculosis (strain CDC 1551 / Oshkosh), this protein is Fluoroquinolones export ATP-binding protein MT2762.